The following is a 486-amino-acid chain: 2-succinylbenzoate--CoA ligase (486 aa).

Belongs to the ATP-dependent AMP-binding enzyme family. MenE subfamily.

The catalysed reaction is 2-succinylbenzoate + ATP + CoA = 2-succinylbenzoyl-CoA + AMP + diphosphate. The protein operates within quinol/quinone metabolism; 1,4-dihydroxy-2-naphthoate biosynthesis; 1,4-dihydroxy-2-naphthoate from chorismate: step 5/7. It participates in quinol/quinone metabolism; menaquinone biosynthesis. Converts 2-succinylbenzoate (OSB) to 2-succinylbenzoyl-CoA (OSB-CoA). This Bacillus pumilus (strain SAFR-032) protein is 2-succinylbenzoate--CoA ligase.